Reading from the N-terminus, the 123-residue chain is Fluoride-specific ion channel FluC (123 aa).

Transmembrane regions (helical) follow at residues 7–27 (LAVA…SGLL), 39–59 (MVNG…FWGF), 68–88 (FLGT…YETF), and 101–121 (LNVA…FLLA). The Na(+) site is built by Gly-75 and Ser-78.

Belongs to the fluoride channel Fluc/FEX (TC 1.A.43) family.

Its subcellular location is the cell membrane. It carries out the reaction fluoride(in) = fluoride(out). Its activity is regulated as follows. Na(+) is not transported, but it plays an essential structural role and its presence is essential for fluoride channel function. In terms of biological role, fluoride-specific ion channel. Important for reducing fluoride concentration in the cell, thus reducing its toxicity. In Thermococcus gammatolerans (strain DSM 15229 / JCM 11827 / EJ3), this protein is Fluoride-specific ion channel FluC.